The sequence spans 456 residues: Protein FAM124B (456 aa).

Positions 262–313 (NGCLRGDTHPQDSSLNSVSTQRTLEPRSRRRSRSRRFKVHSLELPQPSGSWE) are disordered. The segment covering 272–284 (QDSSLNSVSTQRT) has biased composition (polar residues). The span at 289–300 (SRRRSRSRRFKV) shows a compositional bias: basic residues.

It belongs to the FAM124 family. In terms of assembly, interacts with CHD7 and CHD8. As to expression, expressed strongly in lung, at slightly lower levels in heart, kidney, brain and testis, and weakly in liver (at protein level). In brain, highly expressed in cortex, hippocampus, dentate gyrus, caudate putamen and cerebellum (at protein level).

The protein localises to the nucleus. The sequence is that of Protein FAM124B (Fam124b) from Mus musculus (Mouse).